Here is a 1490-residue protein sequence, read N- to C-terminus: Leucine-rich repeat-containing protein 7 (1490 aa).

LRR repeat units follow at residues 23 to 44, 47 to 68, 70 to 91, 93 to 114, 116 to 137, 139 to 161, 162 to 183, 185 to 206, 208 to 229, 231 to 253, 254 to 275, 277 to 298, 300 to 321, 323 to 344, 346 to 367, 369 to 391, and 392 to 413; these read IISVLDYSHCSLQQVPKEVFNF, TLEELYLDANQIEELPKQLFNC, ALRKLSIPDNDLSSLPTSIASL, NLKELDISKNGVQEFPENIKCC, CLTIIEASVNPISKLPDGFTQL, NLTQLYLNDAFLEFLPANFGRLV, KLRILELRENHLKTLPKSMHKL, QLERLDLGNNEFSELPEVLDQI, NLRELWMDNNALQVLPGSIGKL, MLVYLDMSKNRIETVDMDISGCE, ALEDLLLSSNMLQQLPDSIGLL, KLTTLKVDDNQLTMLPNTIGNL, LLEEFDCSCNELESLPPTIGYL, SLRTLAVDENFLPELPREIGSC, NVTVMSLRSNKLEFLPEEIGQM, RLRVLNLSDNRLKNLPFSFTKLK, and ELAALWLSDNQSKALIPLQTEA. 3 positions are modified to phosphoserine: Ser439, Ser441, and Ser443. Over residues 663 to 676 the composition is skewed to basic and acidic residues; the sequence is KKESTDESEVDKTH. Disordered stretches follow at residues 663–709, 775–808, and 822–899; these read KKES…VGSL, DNTGFVSEEATGENANNNPLLSSKARSVPAHGRR, and ELEQ…YHDP. Residues 677 to 686 are compositionally biased toward polar residues; sequence CLNNSVSSGT. Over residues 687–700 the composition is skewed to low complexity; that stretch reads YSDYSPSQASSASS. Residues 787–799 show a composition bias toward polar residues; that stretch reads ENANNNPLLSSKA. The residue at position 831 (Thr831) is a Phosphothreonine. Ser850 bears the Phosphoserine mark. Over residues 859–871 the composition is skewed to low complexity; it reads PSKLETTPTTSPL. Thr865 carries the post-translational modification Phosphothreonine. The residue at position 869 (Ser869) is a Phosphoserine. Over residues 872 to 882 the composition is skewed to basic and acidic residues; sequence PERKDHMKEPT. Residues Ser947, Ser949, and Ser1118 each carry the phosphoserine modification. Arg1149 is subject to Omega-N-methylarginine. The segment covering 1194 to 1217 has biased composition (polar residues); the sequence is LTQRRPLSARSYSTESYGASQTRP. Positions 1194-1218 are disordered; it reads LTQRRPLSARSYSTESYGASQTRPV. A Phosphoserine modification is found at Ser1233. Disordered stretches follow at residues 1238–1265 and 1282–1312; these read GNYGDKTSDNSDIKTRPTPVKGEESCGK and RLDRTPSQQSNILDNGQEDVSPSGQWNPYPL. Residues 1243–1263 are compositionally biased toward basic and acidic residues; it reads KTSDNSDIKTRPTPVKGEESC. Polar residues predominate over residues 1286-1307; sequence TPSQQSNILDNGQEDVSPSGQW. Phosphoserine occurs at positions 1288 and 1392. The PDZ domain maps to 1398–1488; sequence EQFCVRIEKN…TVDLVIQREL (91 aa).

The protein belongs to the LAP (LRR and PDZ) protein family. Interacts with CNKSR2 and DLG4. Interacts with CTNND2/Catenin delta-2. Forms a complex with N-cadherin through CTNND2. Interacts with CAMK2A. O-glycosylated and phosphorylated. As to expression, brain-specific. Highly concentrated at synapses.

Its subcellular location is the cytoplasm. The protein resides in the postsynaptic density. Required for normal synaptic spine architecture and function. Necessary for DISC1 and GRM5 localization to postsynaptic density complexes and for both N-methyl D-aspartate receptor-dependent and metabotropic glutamate receptor-dependent long term depression. The polypeptide is Leucine-rich repeat-containing protein 7 (Lrrc7) (Rattus norvegicus (Rat)).